Consider the following 293-residue polypeptide: Nucleotide-binding protein BCG9842_B5683 (293 aa).

14–21 contributes to the ATP binding site; it reads GMSGAGKT. GTP is bound at residue 65 to 68; it reads DLRG.

It belongs to the RapZ-like family.

Its function is as follows. Displays ATPase and GTPase activities. This Bacillus cereus (strain G9842) protein is Nucleotide-binding protein BCG9842_B5683.